Consider the following 321-residue polypeptide: Chemotaxis protein CheV1 (321 aa).

One can recognise a CheW-like domain in the interval 19-177 (ELQLLCFRLG…IEKMLIDVFP (159 aa)). Residues 198–319 (CVLLADDSPS…IQRVVKQFLE (122 aa)) enclose the Response regulatory domain. Asp252 bears the 4-aspartylphosphate mark.

In terms of biological role, plays an essential role in chemotaxis signal transduction system in order to colonize the host stomach. May act as a phosphate sink to control the flow of phosphate to CheAY. This is Chemotaxis protein CheV1 from Helicobacter pylori (strain ATCC 700392 / 26695) (Campylobacter pylori).